The primary structure comprises 257 residues: Phosphonates import ATP-binding protein PhnC (257 aa).

The 245-residue stretch at 4–248 (IEFKDVNKVY…VFNDIYGRKL (245 aa)) folds into the ABC transporter domain. 37–44 (GLSGAGKS) contacts ATP.

This sequence belongs to the ABC transporter superfamily. Phosphonates importer (TC 3.A.1.9.1) family. In terms of assembly, the complex is composed of two ATP-binding proteins (PhnC), two transmembrane proteins (PhnE) and a solute-binding protein (PhnD).

It localises to the cell membrane. The enzyme catalyses phosphonate(out) + ATP + H2O = phosphonate(in) + ADP + phosphate + H(+). In terms of biological role, part of the ABC transporter complex PhnCDE involved in phosphonates import. Responsible for energy coupling to the transport system. This is Phosphonates import ATP-binding protein PhnC from Staphylococcus haemolyticus (strain JCSC1435).